We begin with the raw amino-acid sequence, 416 residues long: Enterobactin exporter EntS (416 aa).

The Cytoplasmic segment spans residues Met-1–Ala-21. A helical transmembrane segment spans residues Val-22–Val-42. Over Gln-43 to Gly-55 the chain is Periplasmic. Residues Leu-56–Ala-76 form a helical membrane-spanning segment. The Cytoplasmic segment spans residues Asp-77–Lys-83. Residues Val-84–Leu-104 traverse the membrane as a helical segment. Residues Leu-105 to Ser-109 are Periplasmic-facing. A helical membrane pass occupies residues Leu-110–Ala-130. Residues Leu-131 to Arg-156 are Cytoplasmic-facing. A helical membrane pass occupies residues Leu-157–Trp-177. Residue Asn-178 is a topological domain, periplasmic. The chain crosses the membrane as a helical span at residues Tyr-179–Leu-199. At Pro-200–Arg-218 the chain is on the cytoplasmic side. Residues Phe-219–Ala-239 traverse the membrane as a helical segment. The Periplasmic segment spans residues Ser-240 to Ser-256. A helical transmembrane segment spans residues Ala-257–Thr-277. The Cytoplasmic segment spans residues Ser-278 to Pro-287. Residues Gly-288–Leu-307 traverse the membrane as a helical segment. Topologically, residues Met-308–Leu-313 are periplasmic. Residues Gly-314 to Leu-336 form a helical membrane-spanning segment. Over Gln-337–Asn-356 the chain is Cytoplasmic. Residues Val-357–Val-377 traverse the membrane as a helical segment. Residue Ala-378 is a topological domain, periplasmic. Residues Ser-379–Val-399 form a helical membrane-spanning segment. Residues Glu-400 to Ser-416 are Cytoplasmic-facing.

It belongs to the major facilitator superfamily. EntS (TC 2.A.1.38) family.

It is found in the cell inner membrane. In terms of biological role, component of an export pathway for enterobactin. This is Enterobactin exporter EntS from Escherichia coli O45:K1 (strain S88 / ExPEC).